Reading from the N-terminus, the 305-residue chain is Beta-lactamase (305 aa).

Positions M1–A34 form a signal peptide, tat-type signal. S82 serves as the catalytic Acyl-ester intermediate. K250–G252 is a substrate binding site.

The protein belongs to the class-A beta-lactamase family. In terms of processing, predicted to be exported by the Tat system. The position of the signal peptide cleavage has not been experimentally proven.

It catalyses the reaction a beta-lactam + H2O = a substituted beta-amino acid. This chain is Beta-lactamase, found in Streptomyces lavendulae.